The primary structure comprises 484 residues: Sodium-dependent glucose transporter 1 (484 aa).

Residue Ser-6 is modified to Phosphoserine. A run of 12 helical transmembrane segments spans residues 40–60 (WFTTVVLNAAFLGMGVSAAVL), 80–100 (EIFVGRALGYLGGSVVGGVLF), 106–126 (FLLLGLSHLLTAAGLYLTPFC), 135–155 (MMSITGVSFGVLDTGGNVLIL), 168–188 (ALHFSFALGAFLAPLLAKLAW), 227–247 (LLWAYASIGTYVLVLSVFLFA), 274–294 (ALLCLLFLFFFFYVGAEVTYG), 317–337 (SIFWGTFAACRGLAIFFATLL), 340–360 (GTMMVLCNIGSLASSFFLVLF), 366–386 (CLWIASSVYGASMAATFPSGI), 401–421 (AFILVGAALGLMATPALSGIL), and 428–448 (LPVILYMCLGSAVLTTVLFPV).

Belongs to the major facilitator superfamily. In terms of tissue distribution, expressed in brain, liver, lung, and kidney. In kidney expressed in cortex and inner medulla, in ascending thin limbs (ATLs) and lower descending thin limbs (DTLs). Primarily expressed in the proximal tubules of the kidney.

It localises to the apical cell membrane. Its function is as follows. May function as a sodium-dependent glucose transporter. Potential channels for urea in the inner medulla of kidney. This Rattus norvegicus (Rat) protein is Sodium-dependent glucose transporter 1.